Here is a 25-residue protein sequence, read N- to C-terminus: Flagellar filament core protein flaB1 (25 aa).

The protein belongs to the bacterial flagellin family. In terms of assembly, the flagellum consists of an outer layer composed of two sheath proteins, flaA1 (44 kDa) and flaA2 (35 kDa) around a core that contains three proteins flaB1 (37 kDa), flaB2 (34 kDa) and flaB3 (32 kDa).

The protein localises to the periplasmic flagellum. It localises to the periplasm. Its function is as follows. Component of the core of the flagella. This Brachyspira hyodysenteriae (Treponema hyodysenteriae) protein is Flagellar filament core protein flaB1 (flaB1).